Reading from the N-terminus, the 58-residue chain is uncharacterized protein (58 aa).

Residues 12 to 32 (VALVYISVYFFSCISLIVYFF) form a helical membrane-spanning segment.

Its subcellular location is the membrane. This is an uncharacterized protein from Saccharomyces cerevisiae (strain ATCC 204508 / S288c) (Baker's yeast).